A 574-amino-acid chain; its full sequence is Glycine--tRNA ligase (574 aa).

Substrate-binding residues include R96 and E162. Residues 194-196 (RNE), 204-209 (IRLREF), 327-328 (EC), and 450-453 (GIDR) each bind ATP. 209–213 (FTQAE) contributes to the substrate binding site. 446–450 (EPSYG) contacts substrate.

The protein belongs to the class-II aminoacyl-tRNA synthetase family.

It is found in the cytoplasm. The catalysed reaction is tRNA(Gly) + glycine + ATP = glycyl-tRNA(Gly) + AMP + diphosphate. Functionally, catalyzes the attachment of glycine to tRNA(Gly). The chain is Glycine--tRNA ligase from Methanococcus maripaludis (strain C7 / ATCC BAA-1331).